Consider the following 765-residue polypeptide: AMP deaminase 3 (765 aa).

Phosphoserine occurs at positions 85 and 106. The Zn(2+) site is built by His-315 and His-317. Substrate-binding positions include His-317 and 386–391 (KFNSKY). A Zn(2+)-binding site is contributed by His-584. Glu-587 serves as a coordination point for substrate. The active-site Proton acceptor is the His-606. Asp-661 serves as a coordination point for Zn(2+). 662-665 (DPMQ) contacts substrate.

The protein belongs to the metallo-dependent hydrolases superfamily. Adenosine and AMP deaminases family. As to quaternary structure, homotetramer. The cofactor is Zn(2+). In terms of tissue distribution, expressed in adult tissues such as aorta, heart, kidney, lung, muscle and thyroid. Weakly expressed in thyroid and not detected in liver.

The enzyme catalyses AMP + H2O + H(+) = IMP + NH4(+). The protein operates within purine metabolism; IMP biosynthesis via salvage pathway; IMP from AMP: step 1/1. Functionally, AMP deaminase plays a critical role in energy metabolism. In Rattus norvegicus (Rat), this protein is AMP deaminase 3.